A 108-amino-acid chain; its full sequence is Nitrite reductase (NADH) small subunit (108 aa).

Associates with NirB.

It is found in the cytoplasm. It catalyses the reaction NH4(+) + 3 NAD(+) + 2 H2O = nitrite + 3 NADH + 5 H(+). Required for activity of the reductase. The sequence is that of Nitrite reductase (NADH) small subunit (nirD) from Salmonella typhi.